Consider the following 248-residue polypeptide: 14-3-3 protein zeta (248 aa).

This sequence belongs to the 14-3-3 family. Homodimer; homodimerization is not essential for modulating the activity of Slo. Interacts with phosphorylated Slob; the interaction with Slob mediates an indirect interaction with Slo. Interacts with phosphorylated yki. Interacts with hemo; this represses 14-3-3zeta activity which prevents the 14-3-3zeta-mediated activation of phosphoinositide 3-kinase Pi3K68D. This, in turn, inhibits the Pi3K68D-mediated conversion of phosphatidylinositol to phosphatidylinositol-3-phosphate and prevents progression of early endosomes through the maturation process which regulates subsequent steps of phagocytic processing. Interacts with REPTOR (when phosphorylated), this interaction may assist the cytoplasmic retention of REPTOR. In terms of tissue distribution, predominantly expressed in the ventral nerve cord of the embryo, and in the neural tissues of the head. Also found in the region posterior to the morphogenetic furrow of the eye imaginal disk where cells differentiate as photoreceptors.

The protein localises to the cytoplasm. Its subcellular location is the early endosome. Functionally, required in Raf-dependent cell proliferation and photoreceptor differentiation during eye development. Acts upstream of Raf and downstream of Ras, and is essential for viability. Acts as a negative regulator of the slo calcium channel via its interaction with slo-binding protein slob. Inhibits yki activity by restricting its nuclear localization. Binds to and promotes the activity of phosphoinositide 3-kinase Pi3K68D which converts phosphatidylinositol to phosphatidylinositol-3-phosphate and promotes maturation of early endosomes. In Drosophila melanogaster (Fruit fly), this protein is 14-3-3 protein zeta (14-3-3zeta).